A 148-amino-acid chain; its full sequence is NTR domain-containing protein (148 aa).

Positions 1 to 26 are cleaved as a signal peptide; that stretch reads MVCRFSYVQVVLILVVLSVIISWANA. Disulfide bonds link C27–C96, C29–C122, and C40–C146. The 120-residue stretch at 27 to 146 folds into the NTR domain; the sequence is CSCFPPDETR…LQLFNDPQWC (120 aa).

In terms of tissue distribution, prismatic layer of shell (at protein level). Expressed primarily in the mantle with highest level in the mantle edge and lower level in the mantle pallium.

Its subcellular location is the secreted. The sequence is that of NTR domain-containing protein from Margaritifera margaritifera (Freshwater pearl mussel).